The following is a 570-amino-acid chain: Urease subunit alpha (570 aa).

The Urease domain maps to 135-570 (GGLDIHVHFN…ELPLAQRYHL (436 aa)). Positions 140, 142, and 219 each coordinate Ni(2+). Lys219 is modified (N6-carboxylysine). Substrate is bound at residue His221. 2 residues coordinate Ni(2+): His248 and His274. His322 acts as the Proton donor in catalysis. Asp362 is a binding site for Ni(2+).

Belongs to the metallo-dependent hydrolases superfamily. Urease alpha subunit family. Heterotrimer of UreA (gamma), UreB (beta) and UreC (alpha) subunits. Three heterotrimers associate to form the active enzyme. It depends on Ni cation as a cofactor. Post-translationally, carboxylation allows a single lysine to coordinate two nickel ions.

It is found in the cytoplasm. The catalysed reaction is urea + 2 H2O + H(+) = hydrogencarbonate + 2 NH4(+). The protein operates within nitrogen metabolism; urea degradation; CO(2) and NH(3) from urea (urease route): step 1/1. The sequence is that of Urease subunit alpha from Natronomonas pharaonis (strain ATCC 35678 / DSM 2160 / CIP 103997 / JCM 8858 / NBRC 14720 / NCIMB 2260 / Gabara) (Halobacterium pharaonis).